The primary structure comprises 586 residues: 2-succinyl-5-enolpyruvyl-6-hydroxy-3-cyclohexene-1-carboxylate synthase (586 aa).

The protein belongs to the TPP enzyme family. MenD subfamily. In terms of assembly, homodimer. Requires Mg(2+) as cofactor. The cofactor is Mn(2+). It depends on thiamine diphosphate as a cofactor.

The enzyme catalyses isochorismate + 2-oxoglutarate + H(+) = 5-enolpyruvoyl-6-hydroxy-2-succinyl-cyclohex-3-ene-1-carboxylate + CO2. It participates in quinol/quinone metabolism; 1,4-dihydroxy-2-naphthoate biosynthesis; 1,4-dihydroxy-2-naphthoate from chorismate: step 2/7. It functions in the pathway quinol/quinone metabolism; menaquinone biosynthesis. Catalyzes the thiamine diphosphate-dependent decarboxylation of 2-oxoglutarate and the subsequent addition of the resulting succinic semialdehyde-thiamine pyrophosphate anion to isochorismate to yield 2-succinyl-5-enolpyruvyl-6-hydroxy-3-cyclohexene-1-carboxylate (SEPHCHC). In Geobacillus thermodenitrificans (strain NG80-2), this protein is 2-succinyl-5-enolpyruvyl-6-hydroxy-3-cyclohexene-1-carboxylate synthase.